The sequence spans 142 residues: Ribosome-binding factor A (142 aa).

Positions 119–142 (EAKQKQHGVETDAEQGDTKEEGDK) are disordered.

Belongs to the RbfA family. In terms of assembly, monomer. Binds 30S ribosomal subunits, but not 50S ribosomal subunits or 70S ribosomes.

The protein localises to the cytoplasm. In terms of biological role, one of several proteins that assist in the late maturation steps of the functional core of the 30S ribosomal subunit. Associates with free 30S ribosomal subunits (but not with 30S subunits that are part of 70S ribosomes or polysomes). Required for efficient processing of 16S rRNA. May interact with the 5'-terminal helix region of 16S rRNA. The polypeptide is Ribosome-binding factor A (Shewanella pealeana (strain ATCC 700345 / ANG-SQ1)).